The primary structure comprises 263 residues: Benzil reductase ((S)-benzoin forming) IRC24 (263 aa).

NADP(+) is bound by residues isoleucine 7 and asparagine 86. The active-site Proton donor is serine 143. Positions 157, 161, 190, and 192 each coordinate NADP(+). Tyrosine 157 acts as the Proton acceptor in catalysis. Lysine 161 (lowers pKa of active site Tyr) is an active-site residue.

This sequence belongs to the short-chain dehydrogenases/reductases (SDR) family.

The enzyme catalyses (S)-benzoin + NADP(+) = benzil + NADPH + H(+). The catalysed reaction is 2-hydroxy-1-phenyl-1-propanone + NADP(+) = 1-phenyl-1,2-propanedione + NADPH + H(+). Reduces benzil stereospecifically to (S)-benzoin. Also reduces 1-phenyl-1,2-propanedione to 2-hydroxy-1-phenyl-1-propanone. Is probably involved in a pathway contributing to genomic integrity. The sequence is that of Benzil reductase ((S)-benzoin forming) IRC24 (IRC24) from Saccharomyces cerevisiae (strain ATCC 204508 / S288c) (Baker's yeast).